Consider the following 447-residue polypeptide: Tetratricopeptide repeat protein 23 (447 aa).

TPR repeat units lie at residues 45 to 78, 137 to 170, 186 to 219, and 356 to 389; these read LHLC…TRIC, IELF…SKEL, ARIR…VEIS, and AETY…QTLL.

As to quaternary structure, found Associated with the EvC complex composed of EFCAB7, IQCE, EVC2 and EVC.

It localises to the cell projection. The protein resides in the cilium. Its function is as follows. Participates positively in the ciliary Hedgehog (Hh) signaling. The chain is Tetratricopeptide repeat protein 23 (TTC23) from Homo sapiens (Human).